The primary structure comprises 269 residues: Cyclic AMP-dependent transcription factor ATF-1 (269 aa).

The tract at residues 1–90 (MEDSHKSNTT…GEGENPSISA (90 aa)) is disordered. Residues 9–18 (TTETASQPGS) show a composition bias toward polar residues. One can recognise a KID domain in the interval 31-90 (QVSSLSESEESQDSSDSIGSSQKAHGILARRPSYRKILKDLSSEDTRGRKGEGENPSISA). Ser-63 carries the phosphoserine; by CaMK1, CDK3, RPS6KA4 and RPS6KA5 modification. Over residues 67–83 (ILKDLSSEDTRGRKGEG) the composition is skewed to basic and acidic residues. Ser-196 is modified (phosphoserine; by HIPK2). Residue Lys-206 forms a Glycyl lysine isopeptide (Lys-Gly) (interchain with G-Cter in SUMO2) linkage. One can recognise a bZIP domain in the interval 211-269 (QLRREIRLMKNREAARECRRKKKEYVKCLENRVAVLENQNKTLIEELKTLKDLYSHKSV). The basic motif stretch occupies residues 213–237 (RREIRLMKNREAARECRRKKKEYVK). Residues 239–260 (LENRVAVLENQNKTLIEELKTL) form a leucine-zipper region.

The protein belongs to the bZIP family. ATF subfamily. In terms of assembly, binds DNA as a dimer. Interacts with HIPK2 and CDK3. Interacts with MOTS-c, a peptide produced by the mitochondrially encoded 12S rRNA MT-RNR1; the interaction occurs in the nucleus following metabolic stress. Phosphorylated at Ser-196 by HIPK2 in response to genotoxic stress. This phosphorylation promotes transcription repression of FTH1 and other antioxidant detoxification genes. The CDK3-mediated phosphorylation at Ser-63 promotes its transactivation and transcriptional activities. Phosphorylated at Ser-63 by RPS6KA4 and RPS6KA5 in response to mitogenic or stress stimuli.

Its subcellular location is the nucleus. Its function is as follows. Binds the cAMP response element (CRE) (consensus: 5'-GTGACGT[AC][AG]-3'), a sequence present in many viral and cellular promoters. Binds to the Tax-responsive element (TRE) of HTLV-I. Mediates PKA-induced stimulation of CRE-reporter genes. Represses the expression of FTH1 and other antioxidant detoxification genes. Triggers cell proliferation and transformation. The protein is Cyclic AMP-dependent transcription factor ATF-1 (Atf1) of Mus musculus (Mouse).